A 128-amino-acid chain; its full sequence is Cionin (128 aa).

A signal peptide spans 1-22; it reads MGSNIVIYFSIIVIVTLNVNGV. Residues 23-108 constitute a propeptide that is removed on maturation; it reads PASDLFKSVS…NQGHMQRMDR (86 aa). Residues tyrosine 110 and tyrosine 111 each carry the sulfotyrosine modification. Phenylalanine 116 carries the phenylalanine amide modification. Positions 120 to 128 are excised as a propeptide; it reads AIEDVDYEY.

It belongs to the gastrin/cholecystokinin family. In terms of tissue distribution, expressed in both the gut and the neural ganglion.

It is found in the secreted. This is Cionin from Ciona intestinalis (Transparent sea squirt).